Consider the following 309-residue polypeptide: uncharacterized protein (309 aa).

Residues 9–55 (NFLYNIANKDGFKGYKECRTSAYKNVFDDSSTKSTSKFHLGISDTKN) enclose the RPE1 insert domain. A helical transmembrane segment spans residues 62-82 (IIGLILIIFAGVLFYAYILQH).

The protein belongs to the LicD transferase family.

The protein localises to the membrane. This is an uncharacterized protein from Rickettsia typhi (strain ATCC VR-144 / Wilmington).